We begin with the raw amino-acid sequence, 510 residues long: Archaeal glutamate synthase [NADPH] (510 aa).

2 4Fe-4S ferredoxin-type domains span residues 10 to 37 (YKVE…YRRE) and 38 to 68 (GDRI…IKEN). Positions 19, 22, 25, 29, 48, 51, 54, and 58 each coordinate [4Fe-4S] cluster.

The protein belongs to the glutamate synthase family. It depends on FMN as a cofactor.

The catalysed reaction is 2 L-glutamate + NADP(+) = L-glutamine + 2-oxoglutarate + NADPH + H(+). The polypeptide is Archaeal glutamate synthase [NADPH] (Methanocaldococcus jannaschii (strain ATCC 43067 / DSM 2661 / JAL-1 / JCM 10045 / NBRC 100440) (Methanococcus jannaschii)).